The chain runs to 190 residues: Nucleoside triphosphate pyrophosphatase (190 aa).

The active-site Proton acceptor is D69.

Belongs to the Maf family. Requires a divalent metal cation as cofactor.

Its subcellular location is the cytoplasm. The enzyme catalyses a ribonucleoside 5'-triphosphate + H2O = a ribonucleoside 5'-phosphate + diphosphate + H(+). It catalyses the reaction a 2'-deoxyribonucleoside 5'-triphosphate + H2O = a 2'-deoxyribonucleoside 5'-phosphate + diphosphate + H(+). Functionally, nucleoside triphosphate pyrophosphatase. May have a dual role in cell division arrest and in preventing the incorporation of modified nucleotides into cellular nucleic acids. This is Nucleoside triphosphate pyrophosphatase from Helicobacter pylori (strain P12).